We begin with the raw amino-acid sequence, 127 residues long: Holo-[acyl-carrier-protein] synthase (127 aa).

2 residues coordinate Mg(2+): D9 and E58.

This sequence belongs to the P-Pant transferase superfamily. AcpS family. Mg(2+) serves as cofactor.

It localises to the cytoplasm. It catalyses the reaction apo-[ACP] + CoA = holo-[ACP] + adenosine 3',5'-bisphosphate + H(+). Its function is as follows. Transfers the 4'-phosphopantetheine moiety from coenzyme A to a Ser of acyl-carrier-protein. This is Holo-[acyl-carrier-protein] synthase from Shewanella baltica (strain OS195).